A 247-amino-acid polypeptide reads, in one-letter code: DNA polymerase sliding clamp 1 (247 aa).

The protein belongs to the PCNA family. Heterotrimer. The subunits circularize to form a toroid; DNA passes through its center. Replication factor C (RFC) is required to load the toroid on the DNA.

In terms of biological role, sliding clamp subunit that acts as a moving platform for DNA processing. Responsible for tethering the catalytic subunit of DNA polymerase and other proteins to DNA during high-speed replication. This Aeropyrum pernix (strain ATCC 700893 / DSM 11879 / JCM 9820 / NBRC 100138 / K1) protein is DNA polymerase sliding clamp 1.